Reading from the N-terminus, the 195-residue chain is Thymidine kinase (195 aa).

ATP-binding positions include 15–22 (GSMFSGKT) and 91–94 (DEAN). Catalysis depends on Glu92, which acts as the Proton acceptor. Zn(2+) is bound by residues Cys148, Cys151, Cys186, and Cys189.

This sequence belongs to the thymidine kinase family. As to quaternary structure, homotetramer.

It is found in the cytoplasm. It carries out the reaction thymidine + ATP = dTMP + ADP + H(+). The sequence is that of Thymidine kinase from Halobacterium salinarum (strain ATCC 29341 / DSM 671 / R1).